Reading from the N-terminus, the 236-residue chain is Small ribosomal subunit protein uS3 (236 aa).

Positions 39–107 constitute a KH type-2 domain; sequence IREFLTEELK…DTSLNIVEVR (69 aa). A disordered region spans residues 214–236; sequence ASERRAVEGDNQGSSSNRRRENA.

Belongs to the universal ribosomal protein uS3 family. As to quaternary structure, part of the 30S ribosomal subunit. Forms a tight complex with proteins S10 and S14.

Its function is as follows. Binds the lower part of the 30S subunit head. Binds mRNA in the 70S ribosome, positioning it for translation. The polypeptide is Small ribosomal subunit protein uS3 (Brucella melitensis biotype 1 (strain ATCC 23456 / CCUG 17765 / NCTC 10094 / 16M)).